The chain runs to 314 residues: ATP synthase gamma chain (314 aa).

This sequence belongs to the ATPase gamma chain family. As to quaternary structure, F-type ATPases have 2 components, CF(1) - the catalytic core - and CF(0) - the membrane proton channel. CF(1) has five subunits: alpha(3), beta(3), gamma(1), delta(1), epsilon(1). CF(0) has three main subunits: a, b and c.

It is found in the cellular thylakoid membrane. Its function is as follows. Produces ATP from ADP in the presence of a proton gradient across the membrane. The gamma chain is believed to be important in regulating ATPase activity and the flow of protons through the CF(0) complex. The chain is ATP synthase gamma chain from Picosynechococcus sp. (strain ATCC 27264 / PCC 7002 / PR-6) (Agmenellum quadruplicatum).